A 339-amino-acid polypeptide reads, in one-letter code: Ketol-acid reductoisomerase (NADP(+)) (339 aa).

The KARI N-terminal Rossmann domain occupies 1–182 (MRVYYDRDAD…GGGRSGIIET (182 aa)). NADP(+)-binding positions include 24-27 (YGSQ), lysine 48, serine 51, threonine 53, and 83-86 (DELQ). The active site involves histidine 108. Glycine 134 contributes to the NADP(+) binding site. In terms of domain architecture, KARI C-terminal knotted spans 183-328 (NFREECETDL…AKLRGMMPWI (146 aa)). Residues aspartate 191, glutamate 195, glutamate 227, and glutamate 231 each coordinate Mg(2+). Serine 252 is a substrate binding site.

It belongs to the ketol-acid reductoisomerase family. The cofactor is Mg(2+).

It catalyses the reaction (2R)-2,3-dihydroxy-3-methylbutanoate + NADP(+) = (2S)-2-acetolactate + NADPH + H(+). It carries out the reaction (2R,3R)-2,3-dihydroxy-3-methylpentanoate + NADP(+) = (S)-2-ethyl-2-hydroxy-3-oxobutanoate + NADPH + H(+). It functions in the pathway amino-acid biosynthesis; L-isoleucine biosynthesis; L-isoleucine from 2-oxobutanoate: step 2/4. It participates in amino-acid biosynthesis; L-valine biosynthesis; L-valine from pyruvate: step 2/4. Involved in the biosynthesis of branched-chain amino acids (BCAA). Catalyzes an alkyl-migration followed by a ketol-acid reduction of (S)-2-acetolactate (S2AL) to yield (R)-2,3-dihydroxy-isovalerate. In the isomerase reaction, S2AL is rearranged via a Mg-dependent methyl migration to produce 3-hydroxy-3-methyl-2-ketobutyrate (HMKB). In the reductase reaction, this 2-ketoacid undergoes a metal-dependent reduction by NADPH to yield (R)-2,3-dihydroxy-isovalerate. In Rhizobium rhizogenes (strain K84 / ATCC BAA-868) (Agrobacterium radiobacter), this protein is Ketol-acid reductoisomerase (NADP(+)).